Reading from the N-terminus, the 357-residue chain is Fructose-bisphosphate aldolase (357 aa).

Arg-49 and Lys-140 together coordinate substrate. Glu-183 serves as the catalytic Proton acceptor. Lys-225 (schiff-base intermediate with dihydroxyacetone-P) is an active-site residue.

This sequence belongs to the class I fructose-bisphosphate aldolase family.

The catalysed reaction is beta-D-fructose 1,6-bisphosphate = D-glyceraldehyde 3-phosphate + dihydroxyacetone phosphate. It participates in carbohydrate degradation; glycolysis; D-glyceraldehyde 3-phosphate and glycerone phosphate from D-glucose: step 4/4. The polypeptide is Fructose-bisphosphate aldolase (fba) (Dictyostelium discoideum (Social amoeba)).